The chain runs to 138 residues: Mini-ribonuclease 3 (138 aa).

Asp33 is a catalytic residue.

This sequence belongs to the MrnC RNase family. Homodimer. It depends on Mg(2+) as a cofactor.

The protein localises to the cytoplasm. Functionally, involved in correct processing of both the 5' and 3' ends of 23S rRNA precursor. Processes 30S rRNA precursor transcript even in absence of ribonuclease 3 (Rnc); Rnc processes 30S rRNA into smaller rRNA precursors. This is Mini-ribonuclease 3 from Synechococcus sp. (strain ATCC 27144 / PCC 6301 / SAUG 1402/1) (Anacystis nidulans).